A 657-amino-acid chain; its full sequence is Pentatricopeptide repeat-containing protein At1g11710, mitochondrial (657 aa).

The transit peptide at 1 to 74 directs the protein to the mitochondrion; the sequence is MFGHVFSRRT…REFRSSPKLA (74 aa). 14 PPR repeats span residues 147-181, 182-216, 217-251, 252-282, 290-324, 325-359, 360-394, 395-429, 430-464, 465-499, 500-530, 531-565, 568-602, and 603-637; these read SPDV…GFCV, SVHA…GYVE, NVNT…GVWP, NVVS…MGMM, NAVT…GVDC, NERT…GLVV, NTVI…NMQI, DRFT…KLVE, DIVC…GLSL, DAIS…NKTS, NLVI…MEIK, DIVT…DGEK, SLVT…GVVP, and DSIT…GVTP.

This sequence belongs to the PPR family. P subfamily.

It localises to the mitochondrion. The protein is Pentatricopeptide repeat-containing protein At1g11710, mitochondrial of Arabidopsis thaliana (Mouse-ear cress).